We begin with the raw amino-acid sequence, 485 residues long: Cytoplasmic tRNA 2-thiolation protein 2 (485 aa).

Belongs to the CTU2/NCS2 family.

It localises to the cytoplasm. It participates in tRNA modification; 5-methoxycarbonylmethyl-2-thiouridine-tRNA biosynthesis. In terms of biological role, plays a central role in 2-thiolation of mcm(5)S(2)U at tRNA wobble positions of tRNA(Lys), tRNA(Glu) and tRNA(Gln). May act by forming a heterodimer with NCS6 that ligates sulfur from thiocarboxylated URM1 onto the uridine of tRNAs at wobble position. Prior mcm(5) tRNA modification by the elongator complex is required for 2-thiolation. May also be involved in protein urmylation. The protein is Cytoplasmic tRNA 2-thiolation protein 2 of Vanderwaltozyma polyspora (strain ATCC 22028 / DSM 70294 / BCRC 21397 / CBS 2163 / NBRC 10782 / NRRL Y-8283 / UCD 57-17) (Kluyveromyces polysporus).